A 440-amino-acid chain; its full sequence is Transposon Ty1-JR1 Gag polyprotein (440 aa).

The segment covering 1-16 (MESQQLSQHSHISHGS) has biased composition (low complexity). 3 disordered regions span residues 1-93 (MESQ…MMTQ), 126-173 (PQSQ…RPPP), and 352-440 (GSRN…PGTY). 2 stretches are compositionally biased toward polar residues: residues 48–60 (TKAN…TPAS) and 127–152 (QSQF…GNTF). Residues 153-165 (TDSSSADSDMTST) show a composition bias toward low complexity. Residues 299–401 (NNGIHINNKV…NSKSKTARAH (103 aa)) form an RNA-binding region. Over residues 402–418 (NVSTSNNSPSTDNDSIS) the composition is skewed to low complexity. Ser416 bears the Phosphoserine mark. The span at 419-428 (KSTTEPIQLN) shows a compositional bias: polar residues. Over residues 429–440 (NKHDLHLRPGTY) the composition is skewed to basic and acidic residues.

In terms of assembly, homotrimer.

The protein localises to the cytoplasm. Functionally, capsid protein (CA) is the structural component of the virus-like particle (VLP), forming the shell that encapsulates the retrotransposons dimeric RNA genome. The particles are assembled from trimer-clustered units and there are holes in the capsid shells that allow for the diffusion of macromolecules. CA also has nucleocapsid-like chaperone activity, promoting primer tRNA(i)-Met annealing to the multipartite primer-binding site (PBS), dimerization of Ty1 RNA and initiation of reverse transcription. This Saccharomyces cerevisiae (strain ATCC 204508 / S288c) (Baker's yeast) protein is Transposon Ty1-JR1 Gag polyprotein (TY1A-JR1).